Here is a 332-residue protein sequence, read N- to C-terminus: L-lactate dehydrogenase A chain (332 aa).

NAD(+) contacts are provided by residues 29–57 (GMVG…MEDK) and arginine 99. Residues arginine 106, asparagine 138, and arginine 169 each contribute to the substrate site. Asparagine 138 provides a ligand contact to NAD(+). The Proton acceptor role is filled by histidine 193. Substrate is bound at residue threonine 248.

Belongs to the LDH/MDH superfamily. LDH family. As to quaternary structure, homotetramer.

The protein resides in the cytoplasm. It catalyses the reaction (S)-lactate + NAD(+) = pyruvate + NADH + H(+). Its pathway is fermentation; pyruvate fermentation to lactate; (S)-lactate from pyruvate: step 1/1. Its function is as follows. Interconverts simultaneously and stereospecifically pyruvate and lactate with concomitant interconversion of NADH and NAD(+). In Rhinogobiops nicholsii (Blackeye goby), this protein is L-lactate dehydrogenase A chain (ldha).